We begin with the raw amino-acid sequence, 144 residues long: Large ribosomal subunit protein uL16 (144 aa).

It belongs to the universal ribosomal protein uL16 family. Part of the 50S ribosomal subunit.

Functionally, binds 23S rRNA and is also seen to make contacts with the A and possibly P site tRNAs. The sequence is that of Large ribosomal subunit protein uL16 from Halalkalibacterium halodurans (strain ATCC BAA-125 / DSM 18197 / FERM 7344 / JCM 9153 / C-125) (Bacillus halodurans).